A 487-amino-acid polypeptide reads, in one-letter code: H/ACA ribonucleoprotein complex subunit cbf5 (487 aa).

Asp101 acts as the Nucleophile in catalysis. The region spanning 273–348 (YKRIVVKDSA…VVAKVKRCIM (76 aa)) is the PUA domain. Positions 400 to 410 (EEASAHAASES) are enriched in low complexity. A disordered region spans residues 400 to 487 (EEASAHAASE…QEKEDSDDSD (88 aa)). Residues 435-459 (MDVDETKEEKKRKRHEGETAEERAE) show a composition bias toward basic and acidic residues. Over residues 460–477 (RKRKKKEKKEKKERRKSK) the composition is skewed to basic residues.

This sequence belongs to the pseudouridine synthase TruB family. In terms of assembly, component of the small nucleolar ribonucleoprotein particles containing H/ACA-type snoRNAs (H/ACA snoRNPs).

The protein resides in the nucleus. It localises to the nucleolus. The catalysed reaction is uridine in 5S rRNA = pseudouridine in 5S rRNA. It catalyses the reaction uridine in snRNA = pseudouridine in snRNA. It carries out the reaction a uridine in mRNA = a pseudouridine in mRNA. Catalytic subunit of H/ACA small nucleolar ribonucleoprotein (H/ACA snoRNP) complex, which catalyzes pseudouridylation of rRNA. This involves the isomerization of uridine such that the ribose is subsequently attached to C5, instead of the normal N1. Pseudouridine ('psi') residues may serve to stabilize the conformation of rRNAs and play a central role in ribosomal RNA processing. The H/ACA snoRNP complex also mediates pseudouridylation of other types of RNAs. Catalyzes pseudouridylation at position 93 in U2 snRNA. Also catalyzes pseudouridylation of mRNAs; H/ACA-type snoRNAs probably guide pseudouridylation of mRNAs. The sequence is that of H/ACA ribonucleoprotein complex subunit cbf5 (cbf5) from Aspergillus fumigatus (strain ATCC MYA-4609 / CBS 101355 / FGSC A1100 / Af293) (Neosartorya fumigata).